The primary structure comprises 650 residues: MEGGSVNESHSNADQMFDTTIEELCKNLCELQSSNQSPSRQSFGSYGDESKIDSDLQHLALGEMRDIDILEDEGDEDEVAKPEEFDVKSNSSNLDLEVMPRDMEKQTGKKNVTKSNVGVGGMRKKKVGGTKLQNGNEEPSSENVELARFLLNQARNLVSSGDSTHKALELTHRAAKLFEASAENGKPCLEWIMCLHVTAAVHCKLKEYNEAIPVLQRSVEIPVVEEGEEHALAKFAGLMQLGDTYAMVGQLESSISCYTEGLNIQKKVLGENDPRVGETCRYLAEALVQALRFDEAQQVCETALSIHRESGLPGSIAEAADRRLMGLICETKGDHENALEHLVLASMAMAANGQESEVAFVDTSIGDSYLSLSRFDEAICAYQKSLTALKTAKGENHPAVGSVYIRLADLYNRTGKVREAKSYCENALRIYESHNLEISPEEIASGLTDISVICESMNEVEQAITLLQKALKIYADSPGQKIMIAGIEAQMGVLYYMMGKYMESYNTFKSAISKLRATGKKQSTFFGIALNQMGLACIQLDAIEEAVELFEEAKCILEQECGPYHPETLGLYSNLAGAYDAIGRLDDAIKLLGHVVGVREEKLGTANPVTEDEKRRLAQLLKEAGNVTGRKAKSLKTLIDSDLTSSSALR.

Residues 104 to 141 form a disordered region; sequence EKQTGKKNVTKSNVGVGGMRKKKVGGTKLQNGNEEPSS. Residues 131 to 141 are compositionally biased toward polar residues; that stretch reads KLQNGNEEPSS. TPR repeat units lie at residues 192-225, 235-268, 277-310, 319-353, 359-392, 401-434, 444-477, 485-518, 527-560, and 569-602; these read IMCL…PVVE, FAGL…QKKV, GETC…HRES, AADR…AANG, AFVD…LKTA, GSVY…YESH, ASGL…YADS, AGIE…LRAT, GIAL…LEQE, and LGLY…REEK.

Belongs to the kinesin light chain family.

The protein is Protein KINESIN LIGHT CHAIN-RELATED 3 of Arabidopsis thaliana (Mouse-ear cress).